The sequence spans 276 residues: Large ribosomal subunit protein uL2 (276 aa).

Disordered regions lie at residues 1 to 20 (MGIK…TTND) and 219 to 276 (TVRG…RRKK). Residues 7–20 (NPTTNGRRNMTTND) show a composition bias toward polar residues.

The protein belongs to the universal ribosomal protein uL2 family. In terms of assembly, part of the 50S ribosomal subunit. Forms a bridge to the 30S subunit in the 70S ribosome.

In terms of biological role, one of the primary rRNA binding proteins. Required for association of the 30S and 50S subunits to form the 70S ribosome, for tRNA binding and peptide bond formation. It has been suggested to have peptidyltransferase activity; this is somewhat controversial. Makes several contacts with the 16S rRNA in the 70S ribosome. The sequence is that of Large ribosomal subunit protein uL2 from Bacillus anthracis (strain A0248).